The sequence spans 130 residues: uncharacterized protein (130 aa).

This is an uncharacterized protein from Pasteurella multocida (strain Pm70).